Reading from the N-terminus, the 115-residue chain is Histidine-rich carboxyl terminus protein 1 (115 aa).

A helical membrane pass occupies residues 9–29 (ALVGWITGAAVAVLLLLLLLA). The disordered stretch occupies residues 86–115 (GLHHHHHPRHTPHHLHHHHHPHRHHPRHAR). The span at 87-115 (LHHHHHPRHTPHHLHHHHHPHRHHPRHAR) shows a compositional bias: basic residues.

Its subcellular location is the membrane. This is Histidine-rich carboxyl terminus protein 1 (HRCT1) from Homo sapiens (Human).